A 160-amino-acid chain; its full sequence is Phosphopantetheine adenylyltransferase (160 aa).

Position 9 (Ser9) interacts with substrate. ATP is bound by residues 9-10 (SF) and His17. Positions 41, 73, and 87 each coordinate substrate. ATP is bound by residues 88–90 (GMR), Glu98, and 123–129 (YTFFSSS).

The protein belongs to the bacterial CoaD family. As to quaternary structure, homohexamer. The cofactor is Mg(2+).

The protein resides in the cytoplasm. It carries out the reaction (R)-4'-phosphopantetheine + ATP + H(+) = 3'-dephospho-CoA + diphosphate. It participates in cofactor biosynthesis; coenzyme A biosynthesis; CoA from (R)-pantothenate: step 4/5. Its function is as follows. Reversibly transfers an adenylyl group from ATP to 4'-phosphopantetheine, yielding dephospho-CoA (dPCoA) and pyrophosphate. The protein is Phosphopantetheine adenylyltransferase of Roseiflexus sp. (strain RS-1).